The chain runs to 243 residues: Small ribosomal subunit protein eS4 (243 aa).

One can recognise an S4 RNA-binding domain in the interval 43–105 (IPLIYIVRDY…TGEHYRVLPN (63 aa)).

It belongs to the eukaryotic ribosomal protein eS4 family. In terms of assembly, part of the 30S ribosomal subunit.

This is Small ribosomal subunit protein eS4 from Thermococcus kodakarensis (strain ATCC BAA-918 / JCM 12380 / KOD1) (Pyrococcus kodakaraensis (strain KOD1)).